A 252-amino-acid polypeptide reads, in one-letter code: Biosynthetic peptidoglycan transglycosylase (252 aa).

A helical membrane pass occupies residues 23–43 (IGFLLGCIVAGVVAMQVYFFL).

This sequence belongs to the glycosyltransferase 51 family.

Its subcellular location is the cell inner membrane. The enzyme catalyses [GlcNAc-(1-&gt;4)-Mur2Ac(oyl-L-Ala-gamma-D-Glu-L-Lys-D-Ala-D-Ala)](n)-di-trans,octa-cis-undecaprenyl diphosphate + beta-D-GlcNAc-(1-&gt;4)-Mur2Ac(oyl-L-Ala-gamma-D-Glu-L-Lys-D-Ala-D-Ala)-di-trans,octa-cis-undecaprenyl diphosphate = [GlcNAc-(1-&gt;4)-Mur2Ac(oyl-L-Ala-gamma-D-Glu-L-Lys-D-Ala-D-Ala)](n+1)-di-trans,octa-cis-undecaprenyl diphosphate + di-trans,octa-cis-undecaprenyl diphosphate + H(+). Its pathway is cell wall biogenesis; peptidoglycan biosynthesis. Peptidoglycan polymerase that catalyzes glycan chain elongation from lipid-linked precursors. The polypeptide is Biosynthetic peptidoglycan transglycosylase (Cupriavidus pinatubonensis (strain JMP 134 / LMG 1197) (Cupriavidus necator (strain JMP 134))).